We begin with the raw amino-acid sequence, 119 residues long: Large ribosomal subunit protein bL20 (119 aa).

It belongs to the bacterial ribosomal protein bL20 family.

Functionally, binds directly to 23S ribosomal RNA and is necessary for the in vitro assembly process of the 50S ribosomal subunit. It is not involved in the protein synthesizing functions of that subunit. This Acidithiobacillus ferrooxidans (strain ATCC 23270 / DSM 14882 / CIP 104768 / NCIMB 8455) (Ferrobacillus ferrooxidans (strain ATCC 23270)) protein is Large ribosomal subunit protein bL20.